Reading from the N-terminus, the 540-residue chain is Glucose-6-phosphate isomerase (540 aa).

The active-site Proton donor is Glu350. Active-site residues include His381 and Lys503.

Belongs to the GPI family.

The protein resides in the cytoplasm. The enzyme catalyses alpha-D-glucose 6-phosphate = beta-D-fructose 6-phosphate. The protein operates within carbohydrate biosynthesis; gluconeogenesis. It participates in carbohydrate degradation; glycolysis; D-glyceraldehyde 3-phosphate and glycerone phosphate from D-glucose: step 2/4. Functionally, catalyzes the reversible isomerization of glucose-6-phosphate to fructose-6-phosphate. The polypeptide is Glucose-6-phosphate isomerase (Burkholderia pseudomallei (strain 668)).